A 446-amino-acid polypeptide reads, in one-letter code: Protein dyf-7 (446 aa).

The first 24 residues, 1–24 (MNQLWRASCLQVLITFLLIHQNKA), serve as a signal peptide directing secretion. A ZP domain is found at 35 to 295 (DCIADSFTVV…KTCYKKVSDS (261 aa)). Cys211 and Cys273 are joined by a disulfide. A helical transmembrane segment spans residues 377–397 (IPLIIMGSLASLLLFSAGAAI).

Monomer under reducing conditions. Homodimer under non-reducing conditions. May also form higher order oligomers. Proteolytically cleaved and secreted in vitro. In terms of tissue distribution, in the embryo, expressed in the excretory cell and, during dendrite formation, in the non-neuronal cells surrounding the sensory neurons, including hypodermal cells.

The protein resides in the cell membrane. Its subcellular location is the cell projection. The protein localises to the dendrite. It localises to the secreted. Its function is as follows. Required for permeability of amphid and phasmid neurons to external dyes, chemotaxis to ammonium chloride, avoidance of high osmotic stimuli, male mating and dauer formation. Along with dex-1, enables neurite growth and maintenance by anchoring amphid dendritic tips during neuron cell body migration in embryonic and larval development. The protein is Protein dyf-7 of Caenorhabditis elegans.